The following is a 430-amino-acid chain: tRNA(Ile)-lysidine synthase (430 aa).

Residue 21 to 26 coordinates ATP; that stretch reads SGGLDS.

Belongs to the tRNA(Ile)-lysidine synthase family.

It is found in the cytoplasm. It carries out the reaction cytidine(34) in tRNA(Ile2) + L-lysine + ATP = lysidine(34) in tRNA(Ile2) + AMP + diphosphate + H(+). Ligates lysine onto the cytidine present at position 34 of the AUA codon-specific tRNA(Ile) that contains the anticodon CAU, in an ATP-dependent manner. Cytidine is converted to lysidine, thus changing the amino acid specificity of the tRNA from methionine to isoleucine. The sequence is that of tRNA(Ile)-lysidine synthase from Salmonella paratyphi A (strain ATCC 9150 / SARB42).